The chain runs to 123 residues: Putative outer membrane protein CPn_0818/CP_1053/CPj0818/CpB0847 (123 aa).

The signal sequence occupies residues 1–30; the sequence is MKRQKRKQSITLIEMMVVITLIGIIGGALA.

Its subcellular location is the cell outer membrane. The sequence is that of Putative outer membrane protein CPn_0818/CP_1053/CPj0818/CpB0847 from Chlamydia pneumoniae (Chlamydophila pneumoniae).